The primary structure comprises 105 residues: Insulin-like peptide 7 (105 aa).

The N-terminal stretch at 1-18 (MPPIILVFFLVLIPASQQ) is a signal peptide. A propeptide spanning residues 19–57 (YPFSLESLNDQIINEEVIEYMLENSIRSSRTRRVPDEKK) is cleaved from the precursor. 4 disulfides stabilise this stretch: cysteine 61–cysteine 90, cysteine 73–cysteine 103, cysteine 77–cysteine 104, and cysteine 89–cysteine 94.

This sequence belongs to the insulin family.

Its subcellular location is the secreted. Its function is as follows. Insulin-like peptide which plays a role in ageing as a consequence of daf-16 activity. In Caenorhabditis elegans, this protein is Insulin-like peptide 7.